The following is a 497-amino-acid chain: ATP-dependent RNA helicase CshA (497 aa).

Residues 1–29 carry the Q motif motif; sequence MKFSELGLSDSLLKAIKRSGYEEATPIQE. Residues 32 to 202 enclose the Helicase ATP-binding domain; that stretch reads IPMVLEGKDV…VQFMSDPETV (171 aa). Residue 45-52 participates in ATP binding; that stretch reads AQTGTGKT. Residues 150-153 carry the DEAD box motif; sequence DEAD. The 146-residue stretch at 228–373 folds into the Helicase C-terminal domain; it reads DIMTRLIDVQ…PLKPPTAEEA (146 aa). Residues 425–497 form a disordered region; that stretch reads AASEVPVKIT…SFNIRHRKEN (73 aa). Positions 448–458 are enriched in low complexity; sequence RNGNRNNSHGG. 2 stretches are compositionally biased toward basic residues: residues 459–473 and 481–497; these read NHYRRKNFRRHQHGS and KSHSSRHSFNIRHRKEN.

Belongs to the DEAD box helicase family. CshA subfamily. Oligomerizes, may be a member of the RNA degradosome.

The protein resides in the cytoplasm. It localises to the cell membrane. The enzyme catalyses ATP + H2O = ADP + phosphate + H(+). Its function is as follows. DEAD-box RNA helicase possibly involved in RNA degradation. Unwinds dsRNA in both 5'- and 3'-directions, has RNA-dependent ATPase activity. Over-expression leads to cell aggregation. The chain is ATP-dependent RNA helicase CshA from Limosilactobacillus reuteri (Lactobacillus reuteri).